Here is a 955-residue protein sequence, read N- to C-terminus: Thyroid hormone receptor-associated protein 3 (955 aa).

Residues 1–94 (MSKTNKSKSG…YFRGRNRGFY (94 aa)) form a disordered region. Ser-2 carries the N-acetylserine modification. The required for mRNA splicing activation stretch occupies residues 2-190 (SKTNKSKSGS…KSSSKDSRPS (189 aa)). Over residues 14–51 (SRSRSASRSRSRSFSKSRSRSRSLSRSRKRRLSSRSRS) the composition is skewed to basic residues. Arg-17 is subject to Dimethylated arginine. The segment covering 58–75 (HNRERNHPRVYQNRDFRG) has biased composition (basic and acidic residues). At Arg-66 the chain carries Asymmetric dimethylarginine. Positions 82–94 (RPYYFRGRNRGFY) are enriched in low complexity. An asymmetric dimethylarginine mark is found at Arg-101 and Arg-108. The interval 117–559 (AYSPRRGRSR…AKGDFPTGKS (443 aa)) is disordered. The segment covering 121–143 (RRGRSRSRSPKRRSPSPRSRSHS) has biased composition (basic residues). Over residues 144–155 (RNSDKSSSDRSR) the composition is skewed to basic and acidic residues. Low complexity predominate over residues 157-166 (SSSSRSSSNH). Over residues 167 to 188 (SRVESSKRKSAKEKKSSSKDSR) the composition is skewed to basic and acidic residues. Lys-202 is covalently cross-linked (Glycyl lysine isopeptide (Lys-Gly) (interchain with G-Cter in SUMO1); alternate). Lys-202 is covalently cross-linked (Glycyl lysine isopeptide (Lys-Gly) (interchain with G-Cter in SUMO2); alternate). Residues 204-220 (QTFSGGTSQDTKASESS) are compositionally biased toward polar residues. A Glycyl lysine isopeptide (Lys-Gly) (interchain with G-Cter in SUMO2) cross-link involves residue Lys-215. The residue at position 220 (Ser-220) is a Phosphoserine. Lys-221 participates in a covalent cross-link: Glycyl lysine isopeptide (Lys-Gly) (interchain with G-Cter in SUMO2); alternate. An N6-acetyllysine; alternate modification is found at Lys-221. Phosphoserine is present on residues Ser-232, Ser-237, Ser-240, Ser-243, and Ser-248. Lys-252 participates in a covalent cross-link: Glycyl lysine isopeptide (Lys-Gly) (interchain with G-Cter in SUMO2); alternate. N6-methyllysine; alternate is present on Lys-252. Phosphoserine occurs at positions 253 and 257. A compositionally biased stretch (pro residues) spans 266–276 (RPSPVPKPSPP). The span at 282–300 (QMGSTLPSGAGYQSGTHQG) shows a compositional bias: polar residues. Low complexity predominate over residues 305-331 (GSGSLSPSKKSPVGKSPPSTGSTYGSS). 3 positions are modified to phosphoserine: Ser-315, Ser-320, and Ser-323. Phosphothreonine is present on Thr-324. Ser-326 is subject to Phosphoserine. Tyr-328 carries the phosphotyrosine modification. Lys-333 is covalently cross-linked (Glycyl lysine isopeptide (Lys-Gly) (interchain with G-Cter in SUMO2)). Ser-339 carries the post-translational modification Phosphoserine. Lys-346 participates in a covalent cross-link: Glycyl lysine isopeptide (Lys-Gly) (interchain with G-Cter in SUMO2); alternate. The residue at position 346 (Lys-346) is an N6-acetyllysine; alternate. The span at 347-377 (RYLEEQKTENGKDKEQKQTNTDKEKIKEKGS) shows a compositional bias: basic and acidic residues. Residues Lys-353 and Lys-375 each participate in a glycyl lysine isopeptide (Lys-Gly) (interchain with G-Cter in SUMO2) cross-link. A required for mRNA decay activity region spans residues 359 to 955 (DKEQKQTNTD…EKDNIQPTTE (597 aa)). Phosphoserine occurs at positions 377 and 379. Lys-387 participates in a covalent cross-link: Glycyl lysine isopeptide (Lys-Gly) (interchain with G-Cter in SUMO1); alternate. Residue Lys-387 forms a Glycyl lysine isopeptide (Lys-Gly) (interchain with G-Cter in SUMO2); alternate linkage. Glycyl lysine isopeptide (Lys-Gly) (interchain with G-Cter in SUMO2) cross-links involve residues Lys-389 and Lys-396. Phosphothreonine is present on Thr-397. Lys-401 is covalently cross-linked (Glycyl lysine isopeptide (Lys-Gly) (interchain with G-Cter in SUMO2)). Phosphoserine occurs at positions 406 and 408. Residues 414–452 (LRDDFEKKMADFHKEEMDDQDKDKAKGRKESEFDDEPKF) show a composition bias toward basic and acidic residues. Residues Lys-421 and Lys-427 each participate in a glycyl lysine isopeptide (Lys-Gly) (interchain with G-Cter in SUMO2) cross-link. Residue Ser-444 is modified to Phosphoserine. Lys-451 is covalently cross-linked (Glycyl lysine isopeptide (Lys-Gly) (interchain with G-Cter in SUMO1); alternate). Residues Lys-451 and Lys-455 each participate in a glycyl lysine isopeptide (Lys-Gly) (interchain with G-Cter in SUMO2); alternate cross-link. N6-acetyllysine; alternate is present on Lys-455. Glycyl lysine isopeptide (Lys-Gly) (interchain with G-Cter in SUMO2) cross-links involve residues Lys-461 and Lys-467. Ser-468 is modified (phosphoserine). Glycyl lysine isopeptide (Lys-Gly) (interchain with G-Cter in SUMO2); alternate cross-links involve residues Lys-470 and Lys-481. 2 positions are modified to N6-acetyllysine; alternate: Lys-470 and Lys-481. A Glycyl lysine isopeptide (Lys-Gly) (interchain with G-Cter in SUMO2) cross-link involves residue Lys-486. Basic and acidic residues predominate over residues 495-521 (FPERSKKEDRGKRSEGGHRGFVPEKNF). N6-acetyllysine is present on Lys-519. A Glycyl lysine isopeptide (Lys-Gly) (interchain with G-Cter in SUMO2); alternate cross-link involves residue Lys-527. An N6-acetyllysine; alternate modification is found at Lys-527. Residue Ser-535 is modified to Phosphoserine. A compositionally biased stretch (basic and acidic residues) spans 540–550 (KTSESRDKLGA). Residue Lys-551 forms a Glycyl lysine isopeptide (Lys-Gly) (interchain with G-Cter in SUMO2) linkage. Position 552-559 (552-559 (GDFPTGKS)) interacts with ATP. Residue Lys-558 forms a Glycyl lysine isopeptide (Lys-Gly) (interchain with G-Cter in SUMO2); alternate linkage. Position 558 is an N6-acetyllysine; alternate (Lys-558). Phosphoserine is present on residues Ser-560, Ser-562, and Ser-575. Lys-602 is covalently cross-linked (Glycyl lysine isopeptide (Lys-Gly) (interchain with G-Cter in SUMO2)). Residues Ser-619, Ser-622, Ser-672, Ser-682, and Ser-684 each carry the phosphoserine modification. A compositionally biased stretch (basic and acidic residues) spans 663–680 (EQEAAKNKKSPEIHRRID). A disordered region spans residues 663–955 (EQEAAKNKKS…EKDNIQPTTE (293 aa)). Residues 691–761 (LAHDEMKSPR…RSAEKTEKTH (71 aa)) are compositionally biased toward basic and acidic residues. Lys-697 participates in a covalent cross-link: Glycyl lysine isopeptide (Lys-Gly) (interchain with G-Cter in SUMO2). A Phosphoserine modification is found at Ser-698. Residues Lys-705, Lys-709, Lys-711, Lys-756, and Lys-759 each participate in a glycyl lysine isopeptide (Lys-Gly) (interchain with G-Cter in SUMO2) cross-link. Over residues 762 to 775 (KGSKKQKKHRRARD) the composition is skewed to basic residues. The segment covering 779–789 (SSSSSSQSSHS) has biased composition (low complexity). Lys-811 bears the N6-acetyllysine mark. Arg-845 carries the post-translational modification Asymmetric dimethylarginine. The span at 848-859 (YSGNNNNNSNND) shows a compositional bias: low complexity. Thr-874 bears the Phosphothreonine mark. Glycyl lysine isopeptide (Lys-Gly) (interchain with G-Cter in SUMO2) cross-links involve residues Lys-876 and Lys-879. Residues 881 to 895 (YLHDDREGEGSDKWV) show a composition bias toward basic and acidic residues. 2 positions are modified to phosphoserine: Ser-928 and Ser-939. Over residues 930-940 (EEGEIEDDESG) the composition is skewed to acidic residues.

It belongs to the BCLAF1/THRAP3 family. As to quaternary structure, associated with the large multiprotein complex TRAP (Mediator complex-like). Interacts with SFPQ; the interaction is dependent on SFPQ phosphorylation at 'Thr-687' and inhibits binding of SFPQ to an ESS1 exonic splicing silencer element-containing RNA. Interacts with NXF1. Component of the SNARP complex which consists at least of SNIP1, SNW1, THRAP3, BCLAF1 and PNN. Associated with spliced mRNP complexes. Interacts with HELZ2 and PPARG. Interacts with CLOCK and BMAL1. Component of a MACOM-like complex, named WTAP complex, composed of WTAP, ZC3H13, CBLL1, KIAA1429, RBM15, BCLAF1 and THRAP3. ADP-ribosylation during genotoxic stress promotes accumulation in nuclear speckles. In terms of tissue distribution, ubiquitous.

It localises to the nucleus. The protein localises to the nucleoplasm. The protein resides in the nucleus speckle. Functionally, involved in pre-mRNA splicing. Remains associated with spliced mRNA after splicing which probably involves interactions with the exon junction complex (EJC). Can trigger mRNA decay which seems to be independent of nonsense-mediated decay involving premature stop codons (PTC) recognition. May be involved in nuclear mRNA decay. Involved in regulation of signal-induced alternative splicing. During splicing of PTPRC/CD45 is proposed to sequester phosphorylated SFPQ from PTPRC/CD45 pre-mRNA in resting T-cells. Involved in cyclin-D1/CCND1 mRNA stability probably by acting as component of the SNARP complex which associates with both the 3'end of the CCND1 gene and its mRNA. Involved in response to DNA damage. Is excluced from DNA damage sites in a manner that parallels transcription inhibition; the function may involve the SNARP complex. Initially thought to play a role in transcriptional coactivation through its association with the TRAP complex; however, it is not regarded as a stable Mediator complex subunit. Cooperatively with HELZ2, enhances the transcriptional activation mediated by PPARG, maybe through the stabilization of the PPARG binding to DNA in presence of ligand. May play a role in the terminal stage of adipocyte differentiation. Plays a role in the positive regulation of the circadian clock. Acts as a coactivator of the CLOCK-BMAL1 heterodimer and promotes its transcriptional activator activity and binding to circadian target genes. This chain is Thyroid hormone receptor-associated protein 3, found in Homo sapiens (Human).